A 284-amino-acid polypeptide reads, in one-letter code: 2-dehydro-3-deoxyphosphooctonate aldolase (284 aa).

Belongs to the KdsA family.

It is found in the cytoplasm. The catalysed reaction is D-arabinose 5-phosphate + phosphoenolpyruvate + H2O = 3-deoxy-alpha-D-manno-2-octulosonate-8-phosphate + phosphate. Its pathway is carbohydrate biosynthesis; 3-deoxy-D-manno-octulosonate biosynthesis; 3-deoxy-D-manno-octulosonate from D-ribulose 5-phosphate: step 2/3. It participates in bacterial outer membrane biogenesis; lipopolysaccharide biosynthesis. The polypeptide is 2-dehydro-3-deoxyphosphooctonate aldolase (Aliivibrio salmonicida (strain LFI1238) (Vibrio salmonicida (strain LFI1238))).